A 223-amino-acid chain; its full sequence is UPF0441 protein YgiB (223 aa).

The disordered stretch occupies residues 201-223 (ESVAKQSTMQRSAAGTSTRSMGG). Over residues 204–223 (AKQSTMQRSAAGTSTRSMGG) the composition is skewed to polar residues.

This sequence belongs to the UPF0441 family.

The sequence is that of UPF0441 protein YgiB from Salmonella gallinarum (strain 287/91 / NCTC 13346).